Here is a 95-residue protein sequence, read N- to C-terminus: Small ribosomal subunit protein bS20 (95 aa).

2 disordered regions span residues 1-26 (MALR…RSRK) and 76-95 (KSRL…AQPA). The span at 80 to 95 (AKALNKAKAAQAAQPA) shows a compositional bias: low complexity.

It belongs to the bacterial ribosomal protein bS20 family.

Binds directly to 16S ribosomal RNA. The sequence is that of Small ribosomal subunit protein bS20 from Deinococcus geothermalis (strain DSM 11300 / CIP 105573 / AG-3a).